Here is an 888-residue protein sequence, read N- to C-terminus: DNA mismatch repair protein MutS (888 aa).

Positions 249–271 (IGQRPPLSPPSREASGSTMAIDP) are disordered. 638-645 (GPNMAGKS) serves as a coordination point for ATP.

This sequence belongs to the DNA mismatch repair MutS family.

This protein is involved in the repair of mismatches in DNA. It is possible that it carries out the mismatch recognition step. This protein has a weak ATPase activity. This chain is DNA mismatch repair protein MutS, found in Nitrobacter winogradskyi (strain ATCC 25391 / DSM 10237 / CIP 104748 / NCIMB 11846 / Nb-255).